Here is a 249-residue protein sequence, read N- to C-terminus: DNA polymerase sliding clamp 1 (249 aa).

This sequence belongs to the PCNA family. As to quaternary structure, homotrimer. The subunits circularize to form a toroid; DNA passes through its center. Replication factor C (RFC) is required to load the toroid on the DNA. Interacts with TIP.

With respect to regulation, inhibited by interaction with the PCNA inhibitor TIP. Functionally, sliding clamp subunit that acts as a moving platform for DNA processing. Responsible for tethering the catalytic subunit of DNA polymerase and other proteins to DNA during high-speed replication. This chain is DNA polymerase sliding clamp 1, found in Thermococcus kodakarensis (strain ATCC BAA-918 / JCM 12380 / KOD1) (Pyrococcus kodakaraensis (strain KOD1)).